A 184-amino-acid polypeptide reads, in one-letter code: Signal peptidase complex catalytic subunit SEC11 (184 aa).

Over 1-28 (MDFIKEQYNSLVLDLRKTFRNKRDGLSH) the chain is Cytoplasmic. A helical; Signal-anchor for type II membrane protein membrane pass occupies residues 29 to 49 (ILNVICLLLNALMIWKLLVVF). At 50–184 (TGCESPVVVV…MLIMILMGYE (135 aa)) the chain is on the lumenal side. Residues serine 63, histidine 101, and aspartate 127 each act as charge relay system in the active site. Positions 170–181 (AIVSIMLIMILM) are C-terminal short (CTS) helix.

It belongs to the peptidase S26B family. As to quaternary structure, component of the signal peptidase complex (SPC) composed of a catalytic subunit SEC11/SPC21 and three accessory subunits SPC25, SPC3/SPC22, SPC1/SPC12. Within the complex, interacts with SPC25. The complex induces a local thinning of the ER membrane which is used to measure the length of the signal peptide (SP) h-region of protein substrates. This ensures the selectivity of the complex towards h-regions shorter than 18-20 amino acids. The complex interacts with the SEC61 channel-forming translocon complex and is involved in the import of classical signal sequence-containing proteins. Phosphorylated. Phosphorylation increases catalytic activity.

It localises to the endoplasmic reticulum membrane. The enzyme catalyses Cleavage of hydrophobic, N-terminal signal or leader sequences from secreted and periplasmic proteins.. Its activity is regulated as follows. Phosphorylation increases catalytic activity. Ca(2+) slightly increases catalytic activity in vitro. Catalytic component of the signal peptidase complex (SPC) which catalyzes the cleavage of N-terminal signal sequences from nascent proteins as they are translocated into the lumen of the endoplasmic reticulum. Specifically cleaves N-terminal signal peptides that contain a hydrophobic alpha-helix (h-region) shorter than 18-20 amino acids. This chain is Signal peptidase complex catalytic subunit SEC11, found in Plasmodium falciparum (isolate 3D7).